The primary structure comprises 234 residues: MSKSFTFKQFHIDIGSCGMPVSTDGVLLGAWADIRACSQILDIGAGTGLLSLMSAQRNSDAHIDAIELMPIAADVARLNFYQSPWKERLTLIHHDFLTYQAPHKYDAIICNPPYFNNGEQSQKGERSTARHTDSLPFDKLLQHCKTLISPTGRASFILPVFEGELFIKVAKNDDFHLTKITKVKTTEKKSPTRLLIELSLFPHIYQESTLTIHDGNGYSDDFIKLTRTFYLNMD.

It belongs to the methyltransferase superfamily. tRNA (adenine-N(6)-)-methyltransferase family.

The protein resides in the cytoplasm. It carries out the reaction adenosine(37) in tRNA1(Val) + S-adenosyl-L-methionine = N(6)-methyladenosine(37) in tRNA1(Val) + S-adenosyl-L-homocysteine + H(+). Specifically methylates the adenine in position 37 of tRNA(1)(Val) (anticodon cmo5UAC). The chain is tRNA1(Val) (adenine(37)-N6)-methyltransferase from Aliivibrio fischeri (strain ATCC 700601 / ES114) (Vibrio fischeri).